Here is a 242-residue protein sequence, read N- to C-terminus: Zinc import ATP-binding protein ZnuC (242 aa).

The region spanning Ile24–Tyr241 is the ABC transporter domain. Gly56–Thr63 is an ATP binding site.

It belongs to the ABC transporter superfamily. Zinc importer (TC 3.A.1.15.5) family. The complex is composed of two ATP-binding proteins (ZnuC), two transmembrane proteins (ZnuB) and a solute-binding protein (ZnuA).

It localises to the cell inner membrane. The catalysed reaction is Zn(2+)(out) + ATP(in) + H2O(in) = Zn(2+)(in) + ADP(in) + phosphate(in) + H(+)(in). Functionally, part of the ABC transporter complex ZnuABC involved in zinc import. Responsible for energy coupling to the transport system. The protein is Zinc import ATP-binding protein ZnuC of Ehrlichia ruminantium (strain Gardel).